The following is a 318-amino-acid chain: Porphobilinogen deaminase (318 aa).

Cys241 is subject to S-(dipyrrolylmethanemethyl)cysteine.

This sequence belongs to the HMBS family. In terms of assembly, monomer. Dipyrromethane is required as a cofactor.

It carries out the reaction 4 porphobilinogen + H2O = hydroxymethylbilane + 4 NH4(+). It functions in the pathway porphyrin-containing compound metabolism; protoporphyrin-IX biosynthesis; coproporphyrinogen-III from 5-aminolevulinate: step 2/4. Its function is as follows. Tetrapolymerization of the monopyrrole PBG into the hydroxymethylbilane pre-uroporphyrinogen in several discrete steps. In Geobacter sp. (strain M21), this protein is Porphobilinogen deaminase.